The primary structure comprises 658 residues: MTQLAIGEATPHGATYDGHGVNFTLFSAHAERVELCVFDSRGNERRYDLPGRRGDVWHGYLAGARPGLRYGYRVHGPWQPAQGHRFNPAKLLLDPYARRVEGELKDHPLLHGGHDEPDYRDNAAVAPKSVVISDHYDWEDDAAPRTPWGKTVIYEAHVKGLTYLHPELPQEIRGTYKALGHPVMVAYFKQLGITALELLPVAQFASEPRLQRMGLTNYWGYNPMAMFALHPAWASSPETALDEFRDAVKALHRAGIEVILDIVLNHSAELDLDGPTFSLRGIDNRSYYWIRDDGDYHNWTGCGNTLNLSHPGVVEYACECLRYWVETCHVDGFRFDLASVMGRTPTFRQDAPLFAAIKACPVLSTVKLIAEPWDIGEGGYQVGNFPPPFAEWNDHFRDAARRFWLPRNLTTGEFACRFAASSDVFKRNGRAPGASVNLLTAHDGFTLRDCVCFNQKHNEANGEENRDGTNSNYSDNHGKEGLGGPLDLMERRRDSIHALLATLLLSQGTPMLLAGDEHGHSQHGNNNAYCQDNALTWLDWQQANRGLTTFTAALIRLRQQIPALTGNSWWEEGDGNVRWLNKNAQPLSADEWQNGPKLMQILLSDRFLIAINATLEVTDIVLPEGEWRAVPPFAGEDNPVITAVWQGPAHGLCVFQRG.

The Nucleophile role is filled by D336. Catalysis depends on E371, which acts as the Proton donor. Positions 459–484 (EANGEENRDGTNSNYSDNHGKEGLGG) are disordered.

Belongs to the glycosyl hydrolase 13 family.

It catalyses the reaction Hydrolysis of (1-&gt;6)-alpha-D-glucosidic linkages to branches with degrees of polymerization of three or four glucose residues in limit dextrin.. It functions in the pathway glycan degradation; glycogen degradation. Removes maltotriose and maltotetraose chains that are attached by 1,6-alpha-linkage to the limit dextrin main chain, generating a debranched limit dextrin. The protein is Glycogen debranching enzyme of Salmonella choleraesuis (strain SC-B67).